Consider the following 313-residue polypeptide: Urease accessory protein UreD (313 aa).

Residues 1-30 (MTDLSFPGQAASPGEGAGQTPSGGSGHRFD) are disordered. The segment covering 15 to 26 (EGAGQTPSGGSG) has biased composition (gly residues).

This sequence belongs to the UreD family. In terms of assembly, ureD, UreF and UreG form a complex that acts as a GTP-hydrolysis-dependent molecular chaperone, activating the urease apoprotein by helping to assemble the nickel containing metallocenter of UreC. The UreE protein probably delivers the nickel.

It localises to the cytoplasm. In terms of biological role, required for maturation of urease via the functional incorporation of the urease nickel metallocenter. The chain is Urease accessory protein UreD from Chromohalobacter salexigens (strain ATCC BAA-138 / DSM 3043 / CIP 106854 / NCIMB 13768 / 1H11).